Reading from the N-terminus, the 327-residue chain is Pectate lyase A (327 aa).

The signal sequence occupies residues 1-19 (MQNLKFLIAAVSCLGPALA). N99 carries N-linked (GlcNAc...) asparagine glycosylation. The Ca(2+) site is built by D140, D169, and D173. R226 is a catalytic residue.

The protein belongs to the polysaccharide lyase 1 family. Ca(2+) is required as a cofactor.

The protein localises to the secreted. The enzyme catalyses Eliminative cleavage of (1-&gt;4)-alpha-D-galacturonan to give oligosaccharides with 4-deoxy-alpha-D-galact-4-enuronosyl groups at their non-reducing ends.. Pectinolytic enzyme consist of four classes of enzymes: pectin lyase, polygalacturonase, pectin methylesterase and rhamnogalacturonase. Among pectinolytic enzymes, pectin lyase is the most important in depolymerization of pectin, since it cleaves internal glycosidic bonds of highly methylated pectins. Favors pectate, the anion, over pectin, the methyl ester. The sequence is that of Pectate lyase A (plyA) from Emericella nidulans (strain FGSC A4 / ATCC 38163 / CBS 112.46 / NRRL 194 / M139) (Aspergillus nidulans).